A 190-amino-acid polypeptide reads, in one-letter code: dCTP deaminase (190 aa).

Residues K113–R118, T137–E139, Q158, Y172, and Q182 each bind dCTP. E139 acts as the Proton donor/acceptor in catalysis.

The protein belongs to the dCTP deaminase family. Homotrimer.

It carries out the reaction dCTP + H2O + H(+) = dUTP + NH4(+). Its pathway is pyrimidine metabolism; dUMP biosynthesis; dUMP from dCTP (dUTP route): step 1/2. Its function is as follows. Catalyzes the deamination of dCTP to dUTP. The chain is dCTP deaminase from Chromobacterium violaceum (strain ATCC 12472 / DSM 30191 / JCM 1249 / CCUG 213 / NBRC 12614 / NCIMB 9131 / NCTC 9757 / MK).